The chain runs to 1491 residues: Membrane-associated guanylate kinase, WW and PDZ domain-containing protein 1 (1491 aa).

The region spanning Glu-17–Gly-105 is the PDZ 1 domain. The Guanylate kinase-like domain maps to Ala-96 to Phe-287. Arg-103–Lys-110 contributes to the ATP binding site. The tract at residues Ala-236–Ala-267 is disordered. Positions Gly-300–Cys-333 constitute a WW 1 domain. Residue Ser-357 is modified to Phosphoserine. Positions Leu-359–Leu-392 constitute a WW 2 domain. Residues Gln-411 to Gln-421 show a composition bias toward low complexity. The segment at Gln-411–Asn-462 is disordered. The span at Pro-435–Pro-445 shows a compositional bias: pro residues. The PDZ 2 domain occupies His-472–Arg-554. Positions Gln-586–Gly-600 are enriched in polar residues. Disordered regions lie at residues Gln-586–Gly-623, Gln-720–Cys-832, and Thr-932–Ser-987. The 79-residue stretch at Thr-643 to Arg-721 folds into the PDZ 3 domain. Phosphoserine is present on residues Ser-730 and Ser-741. Positions Gln-742–His-752 are enriched in low complexity. Residues His-756–Val-766 show a composition bias toward polar residues. A Phosphoserine modification is found at Ser-800. Positions Ser-813–Pro-895 constitute a PDZ 4 domain. Residues Pro-939–Ser-951 are compositionally biased toward polar residues. Residues Ser-970 to Ser-1066 enclose the PDZ 5 domain. The tract at residues Ser-970–Ser-1066 is interaction with FCHSD2. Over residues Ser-975–Ser-987 the composition is skewed to gly residues. A Phosphoserine modification is found at Ser-1071. A compositionally biased stretch (polar residues) spans Thr-1112–Lys-1130. Disordered regions lie at residues Thr-1112 to Gln-1143 and Asp-1234 to Ile-1491. Residues Glu-1124–Thr-1206 form the PDZ 6 domain. Basic and acidic residues-rich tracts occupy residues Asp-1278–Ala-1338, Lys-1354–Pro-1396, and Leu-1403–Ile-1491. A phosphoserine mark is found at Ser-1361 and Ser-1412.

In terms of assembly, part of a complex composed of AMOTL2, MAGI1 and CDH5, within the complex AMOTL2 acts as a scaffold protein for the interaction of MAGI1 with CDH5. The complex is required for coupling actin fibers to cell junctions in endothelial cells. Interacts through its WW 2 domain with SYNPO and through its PDZ 5 domain with ACTN4. Interacts with cytoplasmic domain of ADGRB1. Interacts via its WW domains with DRPLA. Interacts with ESAM, LRP2 and CXADR. May interact with CTNNB1. Interacts through its PDZ 1 domain with NET1. Interacts with ASIC3 and AMOT. Interacts with FCHSD2. Interacts with IGSF5/JAM4 and through its PDZ 2 and 3 domains with NPHS1 forming a tripartite complex. Interacts with DDN. Interacts with DLL1. Interacts with KCNJ10 and possibly with KCNJ10/KCNJ16 heterodimer; this interaction may facilitate KCNJ10/KCNJ16 potassium channel expression at the basolateral membrane in kidney tubular cells. Interacts with PRRG4 (via cytoplasmic domain). As to quaternary structure, interacts (via PDZ domain) with RAPGEF2. Widely expressed with the exception of skeletal muscle. Isoform 1, isoform 2 and isoform 6 are highly expressed in colon, kidney, lung, liver, and pancreas. Isoform 5 is predominantly expressed in brain and heart. Isoform 3 and isoform 4 are highly expressed in pancreas and brain.

The protein localises to the cell junction. It is found in the tight junction. Its subcellular location is the cell membrane. Its function is as follows. Plays a role in coupling actin fibers to cell junctions in endothelial cells, via its interaction with AMOTL2 and CDH5. May regulate acid-induced ASIC3 currents by modulating its expression at the cell surface. This is Membrane-associated guanylate kinase, WW and PDZ domain-containing protein 1 (MAGI1) from Homo sapiens (Human).